We begin with the raw amino-acid sequence, 28 residues long: Dermaseptin-6TR (28 aa).

In terms of tissue distribution, expressed by the skin glands.

It is found in the secreted. In terms of biological role, has antimicrobial activity. This Phyllomedusa trinitatis (Trinidad leaf frog) protein is Dermaseptin-6TR.